We begin with the raw amino-acid sequence, 83 residues long: Bublin coiled-coil protein (83 aa).

The disordered stretch occupies residues methionine 1–glutamate 25. The stretch at glutamate 25–leucine 74 forms a coiled coil. The residue at position 82 (serine 82) is a Phosphoserine.

This sequence belongs to the UPF0184 (EST00098) family.

It is found in the cell junction. It localises to the cytoplasm. The protein localises to the cytoskeleton. Essential for intermediate filament organization in intestinal cells, interacts with intermediate filament and regulates intestinal lumen morphology. This chain is Bublin coiled-coil protein, found in Mus musculus (Mouse).